The following is a 319-amino-acid chain: 4-hydroxy-3-methylbut-2-enyl diphosphate reductase (319 aa).

A [4Fe-4S] cluster-binding site is contributed by cysteine 12. (2E)-4-hydroxy-3-methylbut-2-enyl diphosphate-binding residues include histidine 41 and histidine 74. Dimethylallyl diphosphate is bound by residues histidine 41 and histidine 74. The isopentenyl diphosphate site is built by histidine 41 and histidine 74. Cysteine 97 serves as a coordination point for [4Fe-4S] cluster. Histidine 125 provides a ligand contact to (2E)-4-hydroxy-3-methylbut-2-enyl diphosphate. Residue histidine 125 coordinates dimethylallyl diphosphate. Isopentenyl diphosphate is bound at residue histidine 125. Glutamate 127 functions as the Proton donor in the catalytic mechanism. Threonine 168 provides a ligand contact to (2E)-4-hydroxy-3-methylbut-2-enyl diphosphate. Cysteine 198 serves as a coordination point for [4Fe-4S] cluster. Residues serine 226, serine 227, asparagine 228, and serine 270 each contribute to the (2E)-4-hydroxy-3-methylbut-2-enyl diphosphate site. The dimethylallyl diphosphate site is built by serine 226, serine 227, asparagine 228, and serine 270. 4 residues coordinate isopentenyl diphosphate: serine 226, serine 227, asparagine 228, and serine 270.

The protein belongs to the IspH family. As to quaternary structure, homodimer. [4Fe-4S] cluster is required as a cofactor.

The enzyme catalyses isopentenyl diphosphate + 2 oxidized [2Fe-2S]-[ferredoxin] + H2O = (2E)-4-hydroxy-3-methylbut-2-enyl diphosphate + 2 reduced [2Fe-2S]-[ferredoxin] + 2 H(+). The catalysed reaction is dimethylallyl diphosphate + 2 oxidized [2Fe-2S]-[ferredoxin] + H2O = (2E)-4-hydroxy-3-methylbut-2-enyl diphosphate + 2 reduced [2Fe-2S]-[ferredoxin] + 2 H(+). It functions in the pathway isoprenoid biosynthesis; dimethylallyl diphosphate biosynthesis; dimethylallyl diphosphate from (2E)-4-hydroxy-3-methylbutenyl diphosphate: step 1/1. The protein operates within isoprenoid biosynthesis; isopentenyl diphosphate biosynthesis via DXP pathway; isopentenyl diphosphate from 1-deoxy-D-xylulose 5-phosphate: step 6/6. Its function is as follows. Catalyzes the conversion of 1-hydroxy-2-methyl-2-(E)-butenyl 4-diphosphate (HMBPP) into a mixture of isopentenyl diphosphate (IPP) and dimethylallyl diphosphate (DMAPP). Acts in the terminal step of the DOXP/MEP pathway for isoprenoid precursor biosynthesis. This chain is 4-hydroxy-3-methylbut-2-enyl diphosphate reductase, found in Hamiltonella defensa subsp. Acyrthosiphon pisum (strain 5AT).